A 372-amino-acid chain; its full sequence is Alanine racemase (372 aa).

Lysine 48 functions as the Proton acceptor; specific for D-alanine in the catalytic mechanism. N6-(pyridoxal phosphate)lysine is present on lysine 48. Arginine 143 provides a ligand contact to substrate. The active-site Proton acceptor; specific for L-alanine is the tyrosine 268. Methionine 316 is a substrate binding site.

The protein belongs to the alanine racemase family. It depends on pyridoxal 5'-phosphate as a cofactor.

It catalyses the reaction L-alanine = D-alanine. It functions in the pathway amino-acid biosynthesis; D-alanine biosynthesis; D-alanine from L-alanine: step 1/1. Functionally, catalyzes the interconversion of L-alanine and D-alanine. May also act on other amino acids. This is Alanine racemase (alr) from Vibrio vulnificus (strain YJ016).